The primary structure comprises 663 residues: DNA ligase 1 (663 aa).

NAD(+)-binding positions include Asp-30–Asp-34 and Ser-78–Leu-79. The N6-AMP-lysine intermediate role is filled by Lys-105. NAD(+) contacts are provided by Arg-126, Glu-161, and Lys-294. Residues Cys-389, Cys-392, Cys-407, and Cys-412 each coordinate Zn(2+). The BRCT domain maps to Ala-574–Val-663.

Belongs to the NAD-dependent DNA ligase family. LigA subfamily. It depends on Mg(2+) as a cofactor. Mn(2+) is required as a cofactor.

The catalysed reaction is NAD(+) + (deoxyribonucleotide)n-3'-hydroxyl + 5'-phospho-(deoxyribonucleotide)m = (deoxyribonucleotide)n+m + AMP + beta-nicotinamide D-nucleotide.. In terms of biological role, DNA ligase that catalyzes the formation of phosphodiester linkages between 5'-phosphoryl and 3'-hydroxyl groups in double-stranded DNA using NAD as a coenzyme and as the energy source for the reaction. It is essential for DNA replication and repair of damaged DNA. The protein is DNA ligase 1 of Nocardia farcinica (strain IFM 10152).